A 556-amino-acid polypeptide reads, in one-letter code: Oxygen-dependent choline dehydrogenase (556 aa).

Asp-4–Glu-33 serves as a coordination point for FAD. The active-site Proton acceptor is the His-473.

Belongs to the GMC oxidoreductase family. FAD is required as a cofactor.

The catalysed reaction is choline + A = betaine aldehyde + AH2. It carries out the reaction betaine aldehyde + NAD(+) + H2O = glycine betaine + NADH + 2 H(+). It functions in the pathway amine and polyamine biosynthesis; betaine biosynthesis via choline pathway; betaine aldehyde from choline (cytochrome c reductase route): step 1/1. Its function is as follows. Involved in the biosynthesis of the osmoprotectant glycine betaine. Catalyzes the oxidation of choline to betaine aldehyde and betaine aldehyde to glycine betaine at the same rate. This chain is Oxygen-dependent choline dehydrogenase, found in Escherichia coli O6:K15:H31 (strain 536 / UPEC).